Here is a 195-residue protein sequence, read N- to C-terminus: Nucleoside-triphosphatase THEP1 (195 aa).

ATP contacts are provided by residues 11 to 18 (GRPGSGKS) and 103 to 110 (VVVIDEIG).

This sequence belongs to the THEP1 NTPase family.

The enzyme catalyses a ribonucleoside 5'-triphosphate + H2O = a ribonucleoside 5'-diphosphate + phosphate + H(+). Its function is as follows. Has nucleotide phosphatase activity towards ATP, GTP, CTP, TTP and UTP. May hydrolyze nucleoside diphosphates with lower efficiency. In Korarchaeum cryptofilum (strain OPF8), this protein is Nucleoside-triphosphatase THEP1.